The sequence spans 313 residues: Nematocyst expressed protein 8 (313 aa).

The first 19 residues, 1–19 (MLRRPLLLVLFTVFSTLYA), serve as a signal peptide directing secretion. The tract at residues 24–56 (GVSPPTNESEAEVSPGDDEGPPEPGNEPDVNWR) is disordered. A compositionally biased stretch (acidic residues) spans 32 to 44 (SEAEVSPGDDEGP). ShKT domains are found at residues 65–99 (CKDK…CRFC), 109–145 (CKDL…CELC), and 151–186 (FKYT…CRKY). Cystine bridges form between C65/C99, C72/C92, C81/C96, C109/C145, C127/C142, C160/C179, and C169/C183. Residues 222–244 (TAAPSTQPAETTKAPPNTAAPTA) show a composition bias toward low complexity. The segment at 222 to 313 (TAAPSTQPAE…LCDEKHSSQQ (92 aa)) is disordered. Over residues 245–265 (APTPAPTPAPAPAPTPAPVAP) the composition is skewed to pro residues. A compositionally biased stretch (acidic residues) spans 280–297 (TPEEQDDNSADESTEIEA).

The protein belongs to the NEP3 family. As to expression, nematocytes. In late planulae, is only expressed in a handful of nematocytes in the lower pharynx. Is absent from the tentacles and outer body wall.

The protein resides in the nematocyst. Its subcellular location is the secreted. In terms of biological role, probable toxin probably only used for predation. The sequence is that of Nematocyst expressed protein 8 from Nematostella vectensis (Starlet sea anemone).